Consider the following 351-residue polypeptide: UDP-3-O-acylglucosamine N-acyltransferase 1 (351 aa).

The active-site Proton acceptor is His237.

The protein belongs to the transferase hexapeptide repeat family. LpxD subfamily. Homotrimer.

It carries out the reaction a UDP-3-O-[(3R)-3-hydroxyacyl]-alpha-D-glucosamine + a (3R)-hydroxyacyl-[ACP] = a UDP-2-N,3-O-bis[(3R)-3-hydroxyacyl]-alpha-D-glucosamine + holo-[ACP] + H(+). Its pathway is bacterial outer membrane biogenesis; LPS lipid A biosynthesis. Its function is as follows. Catalyzes the N-acylation of UDP-3-O-acylglucosamine using 3-hydroxyacyl-ACP as the acyl donor. Is involved in the biosynthesis of lipid A, a phosphorylated glycolipid that anchors the lipopolysaccharide to the outer membrane of the cell. In Legionella pneumophila (strain Paris), this protein is UDP-3-O-acylglucosamine N-acyltransferase 1.